The following is a 291-amino-acid chain: Protease HtpX (291 aa).

A run of 2 helical transmembrane segments spans residues 4 to 24 and 37 to 57; these read VLLF…VLSV and GGLL…SLLM. A Zn(2+)-binding site is contributed by His-143. The active site involves Glu-144. Residue His-147 coordinates Zn(2+). 2 helical membrane passes run 158 to 178 and 198 to 218; these read LIQG…AGIV and FAIS…IVMW. Glu-224 is a Zn(2+) binding site.

The protein belongs to the peptidase M48B family. The cofactor is Zn(2+).

It localises to the cell inner membrane. In Tolumonas auensis (strain DSM 9187 / NBRC 110442 / TA 4), this protein is Protease HtpX.